A 615-amino-acid chain; its full sequence is Pentatricopeptide repeat-containing protein At2g25580 (615 aa).

Positions 40–98 are disordered; the sequence is FGNSNDSSEMNPREGYNGRIQNRTGSSGEVSESIHTQSQSLGSNQGRNEQSWKQSPSLS. Over residues 58–98 the composition is skewed to polar residues; that stretch reads RIQNRTGSSGEVSESIHTQSQSLGSNQGRNEQSWKQSPSLS. PPR repeat units follow at residues 288 to 318, 319 to 353, 354 to 389, and 390 to 420; these read DLSS…MSEK, NLET…GNIP, DGQL…GIAP, and SIED…MPME. A type E(+) motif region spans residues 490-520; sequence SSMQEFRAGDTNLPENDELFQLLRNLKMHMV. A type DYW motif region spans residues 521–615; it reads EVGYVAETRM…NGACTCKDYW (95 aa).

This sequence belongs to the PPR family. PCMP-H subfamily.

The polypeptide is Pentatricopeptide repeat-containing protein At2g25580 (PCMP-H75) (Arabidopsis thaliana (Mouse-ear cress)).